Here is a 487-residue protein sequence, read N- to C-terminus: E3 ubiquitin-protein ligase TRIM50 (487 aa).

The segment at 16–57 (CPICLEVFKEPLMLQCGHSYCKGCLVSLSCHLDAELRCPVCR) adopts an RING-type zinc-finger fold. The B box-type zinc-finger motif lies at 84–125 (PEPKVCVHHRNPLSLFCEKDQELICGLCGLLGSHQHHPVTPV). Positions 89, 92, 111, and 117 each coordinate Zn(2+). Coiled-coil stretches lie at residues 125-169 (VSTV…NESD) and 204-235 (LVAS…FGNE). One can recognise a B30.2/SPRY domain in the interval 276–475 (DIKLTVWKRL…LPMVLPPPSG (200 aa)). Residue lysine 373 is modified to N6-acetyllysine. The disordered stretch occupies residues 468–487 (MVLPPPSGPGPLSPEQPTKL). The span at 469-481 (VLPPPSGPGPLSP) shows a compositional bias: pro residues.

It belongs to the TRIM/RBCC family. Can form dimers and trimers. Interacts with several E2 ubiquitin-conjugating enzymes, including UBE2L6, UBE2E1, UBE2E3. No interaction with UBE2H. Interacts with BECN1. Interacts with SQSTM1. Interacts with NLRP3. Post-translationally, auto-ubiquitinated. In terms of processing, acetylated by EP300 and KAT2B. HDAC6 drives TRIM50 deacetylation. Acetylation antagonizes with TRIM50 ubiquitination.

It localises to the cytoplasm. The enzyme catalyses S-ubiquitinyl-[E2 ubiquitin-conjugating enzyme]-L-cysteine + [acceptor protein]-L-lysine = [E2 ubiquitin-conjugating enzyme]-L-cysteine + N(6)-ubiquitinyl-[acceptor protein]-L-lysine.. In terms of biological role, E3 ubiquitin-protein ligase that ubiquitinates Beclin-1/BECN1 in a 'Lys-63'-dependent manner enhancing its binding to ULK1. In turn, promotes starvation-induced autophagy activation. Also interacts with p62/SQSTM1 protein and thereby induces the formation and the autophagy clearance of aggresome-associated polyubiquitinated proteins through HDAC6 interaction. Also promotes NLRP3 inflammasome activation by directly inducing NLRP3 oligomerization independent of its E3 ligase function. The chain is E3 ubiquitin-protein ligase TRIM50 from Homo sapiens (Human).